Reading from the N-terminus, the 357-residue chain is NADH-quinone oxidoreductase subunit H (357 aa).

A run of 8 helical transmembrane segments spans residues 25-45, 94-114, 130-150, 166-186, 201-221, 254-274, 294-314, and 329-349; these read ILIILIKAITLVIPLMLVVAY, IYLFLLAPVLAIAPAIAVWVV, LLYVLAIGSIGVYGIILAGWA, LLVSYEIVIGFALATVVMIAG, IIYWNFIPLFPMMIIFFISAL, FFLAEYANMILMAVLAVVMFF, VPGIIWLLAKTTFFMFLYLWV, and LSWKVFLPITIIWIFVVALMT.

This sequence belongs to the complex I subunit 1 family. As to quaternary structure, NDH-1 is composed of 14 different subunits. Subunits NuoA, H, J, K, L, M, N constitute the membrane sector of the complex.

It is found in the cell inner membrane. The enzyme catalyses a quinone + NADH + 5 H(+)(in) = a quinol + NAD(+) + 4 H(+)(out). NDH-1 shuttles electrons from NADH, via FMN and iron-sulfur (Fe-S) centers, to quinones in the respiratory chain. The immediate electron acceptor for the enzyme in this species is believed to be ubiquinone. Couples the redox reaction to proton translocation (for every two electrons transferred, four hydrogen ions are translocated across the cytoplasmic membrane), and thus conserves the redox energy in a proton gradient. This subunit may bind ubiquinone. This Ruthia magnifica subsp. Calyptogena magnifica protein is NADH-quinone oxidoreductase subunit H.